A 486-amino-acid chain; its full sequence is ATP synthase subunit beta (486 aa).

171-178 provides a ligand contact to ATP; sequence GGAGVGKT.

This sequence belongs to the ATPase alpha/beta chains family. F-type ATPases have 2 components, CF(1) - the catalytic core - and CF(0) - the membrane proton channel. CF(1) has five subunits: alpha(3), beta(3), gamma(1), delta(1), epsilon(1). CF(0) has three main subunits: a(1), b(2) and c(9-12). The alpha and beta chains form an alternating ring which encloses part of the gamma chain. CF(1) is attached to CF(0) by a central stalk formed by the gamma and epsilon chains, while a peripheral stalk is formed by the delta and b chains.

The protein localises to the cell membrane. It carries out the reaction ATP + H2O + 4 H(+)(in) = ADP + phosphate + 5 H(+)(out). Functionally, produces ATP from ADP in the presence of a proton gradient across the membrane. The catalytic sites are hosted primarily by the beta subunits. This is ATP synthase subunit beta from Salinispora tropica (strain ATCC BAA-916 / DSM 44818 / JCM 13857 / NBRC 105044 / CNB-440).